The primary structure comprises 572 residues: Potassium-transporting ATPase potassium-binding subunit (572 aa).

The next 10 membrane-spanning stretches (helical) occupy residues 6 to 26 (ILFV…GTYI), 66 to 86 (FFSL…VLLL), 135 to 155 (ALAV…IVLI), 177 to 197 (IFWI…FQGV), 251 to 271 (TIIT…ALTY), 283 to 303 (GWMI…VMTI), 382 to 402 (IFGG…LAVF), 428 to 448 (MFAL…AAVI), 493 to 513 (ITIA…VMML), and 537 to 557 (FIFS…TIFP).

Belongs to the KdpA family. The system is composed of three essential subunits: KdpA, KdpB and KdpC.

Its subcellular location is the cell inner membrane. In terms of biological role, part of the high-affinity ATP-driven potassium transport (or Kdp) system, which catalyzes the hydrolysis of ATP coupled with the electrogenic transport of potassium into the cytoplasm. This subunit binds the periplasmic potassium ions and delivers the ions to the membrane domain of KdpB through an intramembrane tunnel. In Francisella philomiragia subsp. philomiragia (strain ATCC 25017 / CCUG 19701 / FSC 153 / O#319-036), this protein is Potassium-transporting ATPase potassium-binding subunit.